The sequence spans 339 residues: Glyceraldehyde-3-phosphate dehydrogenase (339 aa).

Residues 12–13 (RI), Asp-39, Arg-84, and Ser-127 contribute to the NAD(+) site. D-glyceraldehyde 3-phosphate is bound by residues 157 to 159 (SCT), Thr-188, Arg-203, 216 to 217 (TG), and Arg-239. Cys-158 serves as the catalytic Nucleophile. Asn-320 provides a ligand contact to NAD(+).

Belongs to the glyceraldehyde-3-phosphate dehydrogenase family. Homotetramer.

It localises to the cytoplasm. It catalyses the reaction D-glyceraldehyde 3-phosphate + phosphate + NAD(+) = (2R)-3-phospho-glyceroyl phosphate + NADH + H(+). The protein operates within carbohydrate degradation; glycolysis; pyruvate from D-glyceraldehyde 3-phosphate: step 1/5. Its function is as follows. Catalyzes the oxidative phosphorylation of glyceraldehyde 3-phosphate (G3P) to 1,3-bisphosphoglycerate (BPG) using the cofactor NAD. The first reaction step involves the formation of a hemiacetal intermediate between G3P and a cysteine residue, and this hemiacetal intermediate is then oxidized to a thioester, with concomitant reduction of NAD to NADH. The reduced NADH is then exchanged with the second NAD, and the thioester is attacked by a nucleophilic inorganic phosphate to produce BPG. In Mycobacterium avium, this protein is Glyceraldehyde-3-phosphate dehydrogenase (gapA).